The chain runs to 421 residues: MSNIVVLDNGGGLIKAGQGGERDPTTVIPNCLYKPLSSKKFIHPSPLTTLSDEIDLTSAAVRRPIDRGYLINSDLQREIWSHLFTSLLHIAPSSSSLLLTEAPLSIPSVQRTTDELVFEDFGFSSLYIAHPQSLVHLYEASRQPDSILSKTQCSLVVDCGFSFTHAVPVLHNFTLNHAIKRIDLGGKAFTNYLKELVSYRSINVMDETFLVDDAKEKLCFVSLDLLRDLRLARNGNTLIKSTYVLPDGVTHTKGYVKDPQAAKRFLSLSEKESVVVMDKVGERKKADMNKNEIDLTNERFLVPETLFQPADLGMNQAGLAECIVRAINSCHSYLQPVLYQSIILTGGSTLFPQLKERLEGELRPLVPDHFDVKITTQEDPILGVWRGGSLLASSPDFESMCVTKAEYEELGSARCRRRFFH.

It belongs to the actin family. ARP6 subfamily. In terms of assembly, component of the SWR1 chromatin-remodeling complex composed of at least ARP6/ESD1/SUF3, PIE1, SWC6, SWC2 and H2AZs (HTA8, HTA9, HTA11). Interacts directly with SWC6/SEF and PIE1. Also interacts with H2A.F/Z proteins. Mostly expressed in flowers, and, to a lower extent, in seedlings, shoot apex, stems, siliques, seeds, and roots (at protein level).

The protein resides in the nucleus. Its subcellular location is the cytoplasm. In terms of biological role, component of the SWR1 complex which mediates the ATP-dependent exchange of histone H2A for the H2A variant H2A.F/Z leading to transcriptional regulation of selected genes (e.g. FLC) by chromatin remodeling. Binds to the promoter region of FLC chromatin. Required for the activation of FLC and FLC/MAF genes expression to levels that inhibit flowering, through both histone H3 and H4 acetylation and methylation mechanisms. Involved in several developmental processes including organization of plant organs, leaves formation, flowering time repression, and fertility. Modulates photoperiod-dependent epidermal leaves cell development; promotes cell division in long days, and cell expansion/division in short days. May be involved in the regulation of pathogenesis-related proteins (PRs). In Arabidopsis thaliana (Mouse-ear cress), this protein is Actin-related protein 6 (ARP6).